Reading from the N-terminus, the 319-residue chain is Acetyl esterase (319 aa).

The Involved in the stabilization of the negatively charged intermediate by the formation of the oxyanion hole signature appears at 91-93; the sequence is HGG. Catalysis depends on residues Ser165, Asp262, and His292.

Belongs to the 'GDXG' lipolytic enzyme family. In terms of assembly, homodimer. Interacts with MalT and MelA.

The protein localises to the cytoplasm. In terms of biological role, displays esterase activity towards short chain fatty esters (acyl chain length of up to 8 carbons). Able to hydrolyze triacetylglycerol (triacetin) and tributyrylglycerol (tributyrin), but not trioleylglycerol (triolein) or cholesterol oleate. Negatively regulates MalT activity by antagonizing maltotriose binding. Inhibits MelA galactosidase activity. In Escherichia coli O6:H1 (strain CFT073 / ATCC 700928 / UPEC), this protein is Acetyl esterase.